Consider the following 104-residue polypeptide: Putative Fis-like DNA-binding protein (104 aa).

Residues 80-99 (QTKASELLGLNRGTLRKKLK) constitute a DNA-binding region (H-T-H motif).

It belongs to the transcriptional regulatory Fis family.

The chain is Putative Fis-like DNA-binding protein from Pseudomonas aeruginosa (strain ATCC 15692 / DSM 22644 / CIP 104116 / JCM 14847 / LMG 12228 / 1C / PRS 101 / PAO1).